The primary structure comprises 100 residues: MEAGSSNSSGQLSGRVVDTRGKHRIQAELKRLEQEARFLEEELEQLEKMDNASASCKEFLDSVDSKPDPLLPETTGPVNATWDQWFEGPKEAKRCGCSIL.

Methionine 1 is modified (N-acetylmethionine). A coiled-coil region spans residues 19–55 (TRGKHRIQAELKRLEQEARFLEEELEQLEKMDNASAS). The G protein gamma domain maps to 21–100 (GKHRIQAELK…EAKRCGCSIL (80 aa)). The interval 90–96 (KEAKRCG) is regulates lipidation and cell membrane subcellular localization. A lipid anchor (S-palmitoyl cysteine) is attached at cysteine 95. Cysteine 97 carries the cysteine methyl ester modification. Cysteine 97 is lipidated: S-farnesyl cysteine. Positions 98–100 (SIL) are cleaved as a propeptide — removed in mature form.

As to quaternary structure, g proteins are composed of 3 units, alpha, beta and gamma. GPG1 interacts with the beta subunit GB1. The dimer GB1-GG2 interacts with NDL1, NDL2 and NDL3. Binds to NUDT7. In terms of tissue distribution, mostly expressed in roots (excluded from the stele), seedlings (especially at the hypocotyl/root junction), floral stems, floral buds, flowers and siliques, and, to a lower extent, in leaves (restricted to guard cells). Also present in hydathods.

It localises to the cell membrane. Functionally, guanine nucleotide-binding proteins (G proteins) are involved as a modulator or transducer in various transmembrane signaling systems. The beta and gamma chains are required for the GTPase activity, for replacement of GDP by GTP, and for G protein-effector interaction. Involved in the abscisic acid (ABA) and ethylene signaling pathways. Regulates basipetal transport of auxin (IAA) in roots and hypocotyls, and thus modulates root architecture (e.g. lateral root formation). The heterotrimeric G-protein controls defense responses to necrotrophic and vascular fungi probably by modulating cell wall-related genes expression; involved in resistance to Plectosphaerella cucumerina. This is Guanine nucleotide-binding protein subunit gamma 2 (GG2) from Arabidopsis thaliana (Mouse-ear cress).